Here is a 459-residue protein sequence, read N- to C-terminus: Anthocyanidin 3-O-glucoside 2''-O-glucosyltransferase (459 aa).

His20 functions as the Proton acceptor in the catalytic mechanism. His20 serves as a coordination point for an anthocyanidin. Residue Asp117 is the Charge relay of the active site. Positions 138, 335, 337, 352, 355, 357, and 360 each coordinate UDP-alpha-D-glucose. Gly375 serves as a coordination point for an anthocyanidin. UDP-alpha-D-glucose-binding residues include Asp376 and Gln377.

It belongs to the UDP-glycosyltransferase family. As to expression, mainly expressed in the petals and tubes of flower buds at around 24 hours before flower opening.

It catalyses the reaction an anthocyanidin 3-O-beta-D-glucoside + UDP-alpha-D-glucose = an anthocyanidin 3-O-sophoroside + UDP + 2 H(+). The protein operates within pigment biosynthesis; anthocyanin biosynthesis. Its function is as follows. Glycosyltransferase that mediates the glucosylation of anthocyanidin 3-O-glucosides to yield anthocyanidin 3-O-sophorosides. 3-O-sophoroside derivatives are required for the bright blue or red color of flowers. This Ipomoea nil (Japanese morning glory) protein is Anthocyanidin 3-O-glucoside 2''-O-glucosyltransferase (3GGT).